Here is a 600-residue protein sequence, read N- to C-terminus: Rhesus-like glycoprotein B (600 aa).

Topologically, residues 1–16 (MSKDEHKLPLSKRKES) are cytoplasmic. The helical transmembrane segment at 17 to 37 (IIFMMILFAFQVFMVVLFSVW) threads the bilayer. Residues 38–73 (VRYSKNEVNYSTLTPEQLQELEATGGVVQEEVTNIY) lie on the Extracellular side of the membrane. Asparagine 46 is a glycosylation site (N-linked (GlcNAc...) asparagine). Residues 74-94 (GYFRDINIMIFFGFGFLMTFL) traverse the membrane as a helical segment. At 95 to 102 (RRYGYSAL) the chain is on the cytoplasmic side. A helical membrane pass occupies residues 103–123 (GYTFIISALVAQWSVLIYGFF). At 124 to 145 (ETVDHKNDHGGDYASTFEMSQT) the chain is on the extracellular side. Residues 146–166 (VLLQGLFCAGAVMISYGAVLG) form a helical membrane-spanning segment. At 167 to 170 (RVTP) the chain is on the cytoplasmic side. A helical transmembrane segment spans residues 171-191 (LQMLVVGIFEPIFYFLNMFIG). At 192 to 199 (EMNLEAID) the chain is on the extracellular side. Residues 200–220 (VGGGMYIHLFGSVFGLTIAWF) traverse the membrane as a helical segment. Topologically, residues 221 to 240 (LTDKKSKDCEDNSPSYTGDY) are cytoplasmic. The helical transmembrane segment at 241–261 (FAMAGTLFLWMMWPSFNAAIA) threads the bilayer. Topologically, residues 262–274 (PLGEPQFRAIANT) are extracellular. Residues 275–295 (FLSLTASTIATFIVTRLFGHL) traverse the membrane as a helical segment. Over 296-303 (GHKIDMVH) the chain is Cytoplasmic. A helical transmembrane segment spans residues 304–323 (VQNSSLAGGVVQGCLAHMNI). At 324–325 (NP) the chain is on the extracellular side. A helical transmembrane segment spans residues 326-346 (GGAIGMGFLAGVISVIGYLFI). The Cytoplasmic segment spans residues 347-361 (SPFLQRRFNIQDTCG). Residues 362–382 (IHNLHFMPGFIGSIAACIAAW) form a helical membrane-spanning segment. Topologically, residues 383 to 411 (KGLNDRSLYNPIEFNQIFRAGEDQARNNA) are extracellular. A helical transmembrane segment spans residues 412-432 (AATFISIGIAIAGGLFVGMIL). Over 433–600 (KALKKVGGLK…SSTNSPTSKV (168 aa)) the chain is Cytoplasmic. The disordered stretch occupies residues 471-600 (NLPMPTTDNG…SSTNSPTSKV (130 aa)). The segment covering 498–510 (NKKENGYRRDLIR) has biased composition (basic and acidic residues). Residues 519–529 (EQSTDSSYSDS) show a composition bias toward low complexity. Basic residues predominate over residues 540-554 (RIRKLAKKSYRRSKK). A compositionally biased stretch (basic and acidic residues) spans 555–566 (SHSEHQPQHQPE). The span at 571 to 580 (NNNNNNNNNN) shows a compositional bias: low complexity. The span at 581–600 (ATAETTDNGGSSTNSPTSKV) shows a compositional bias: polar residues.

It belongs to the ammonium transporter (TC 2.A.49) family. Rh subfamily.

It is found in the membrane. May be a carbon dioxide/bicarbonate transporter. This Dictyostelium discoideum (Social amoeba) protein is Rhesus-like glycoprotein B (rhgB).